Consider the following 416-residue polypeptide: Gamma-glutamyl phosphate reductase (416 aa).

This sequence belongs to the gamma-glutamyl phosphate reductase family.

It is found in the cytoplasm. It catalyses the reaction L-glutamate 5-semialdehyde + phosphate + NADP(+) = L-glutamyl 5-phosphate + NADPH + H(+). It functions in the pathway amino-acid biosynthesis; L-proline biosynthesis; L-glutamate 5-semialdehyde from L-glutamate: step 2/2. Catalyzes the NADPH-dependent reduction of L-glutamate 5-phosphate into L-glutamate 5-semialdehyde and phosphate. The product spontaneously undergoes cyclization to form 1-pyrroline-5-carboxylate. This Salmonella newport (strain SL254) protein is Gamma-glutamyl phosphate reductase.